The chain runs to 213 residues: Transcriptional regulatory protein YdfI (213 aa).

One can recognise a Response regulatory domain in the interval 3–118; that stretch reads KVLIVDDHLV…TLFHTMDAAI (116 aa). Position 54 is a 4-aspartylphosphate (Asp-54). An HTH luxR-type domain is found at 142–207; the sequence is KQRNETQLTE…EAVTIAMQKG (66 aa). The segment at residues 166–185 is a DNA-binding region (H-T-H motif); that stretch reads SKAIAFDLGVSERTVKSRLT.

Post-translationally, phosphorylated by YdfH.

The protein resides in the cytoplasm. Functionally, member of the two-component regulatory system YdfH/YdfI. Regulates the transcription of ydfJ by binding to its promoter region. The chain is Transcriptional regulatory protein YdfI (ydfI) from Bacillus subtilis (strain 168).